The primary structure comprises 322 residues: MRIQFGYVAMSMELANASPSKTMTATQFEKIEDHEAGLRKLERIAKTNLHNCLRLLKHNLAYQISFFRLSSKLVPLVNHPLTEGWKYELAIAEELQAVGEFASEHQMRIDFHPDHFVVLNSEAKEITRRSLQTLLYHYKLLKGMEIDPRHRCVLHVGGKKKGVEAGLEQFIENTASIPKSLLSMIMLENDDKSYTIDDVLYLGEKLAIPVVLDIHHHDVLHRSKSLQETWQRIVATWEDSPLPVKIHLSSPLSGEDDPRHHDYINADRFIAFLHEIGADAVDHLHVMIEAKKKDLALFQLMKDLAEYDEITVVSKSAVEFNP.

The protein belongs to the uve1/UvsE family.

Component in a DNA repair pathway. Removal of UV LIGHT damaged nucleotides. Recognizes pyrimidine dimers and cleave a phosphodiester bond immediately 5' to the lesion. The sequence is that of UV DNA damage endonuclease from Halalkalibacterium halodurans (strain ATCC BAA-125 / DSM 18197 / FERM 7344 / JCM 9153 / C-125) (Bacillus halodurans).